We begin with the raw amino-acid sequence, 769 residues long: Calcium up-regulated protein F (769 aa).

Positions 1–21 (MINIKDISKSSNQSEEKSLKG) are disordered. Ricin B-type lectin domains lie at 25-145 (KTKY…WTTF) and 116-249 (QGNG…WGIN).

The protein belongs to the cup family.

The protein localises to the cytoplasm. Its subcellular location is the membrane. In terms of biological role, may play an important role in stabilizing and/or regulating the cell membrane during Ca(2+) stress or certain stages of development. This Dictyostelium discoideum (Social amoeba) protein is Calcium up-regulated protein F (cupF).